The following is an 879-amino-acid chain: Alanine--tRNA ligase (879 aa).

His566, His570, Cys668, and His672 together coordinate Zn(2+).

This sequence belongs to the class-II aminoacyl-tRNA synthetase family. Requires Zn(2+) as cofactor.

It is found in the cytoplasm. It carries out the reaction tRNA(Ala) + L-alanine + ATP = L-alanyl-tRNA(Ala) + AMP + diphosphate. Catalyzes the attachment of alanine to tRNA(Ala) in a two-step reaction: alanine is first activated by ATP to form Ala-AMP and then transferred to the acceptor end of tRNA(Ala). Also edits incorrectly charged Ser-tRNA(Ala) and Gly-tRNA(Ala) via its editing domain. This chain is Alanine--tRNA ligase, found in Clostridium beijerinckii (strain ATCC 51743 / NCIMB 8052) (Clostridium acetobutylicum).